A 307-amino-acid chain; its full sequence is Ornithine carbamoyltransferase (307 aa).

Residues 50 to 53 (STRT), Gln-77, Arg-101, and 128 to 131 (HPCQ) contribute to the carbamoyl phosphate site. L-ornithine contacts are provided by residues Asn-160, Asp-224, and 228-229 (SM). Residues 264–265 (CL) and Arg-292 each bind carbamoyl phosphate.

This sequence belongs to the aspartate/ornithine carbamoyltransferase superfamily. OTCase family.

It is found in the cytoplasm. The enzyme catalyses carbamoyl phosphate + L-ornithine = L-citrulline + phosphate + H(+). Its pathway is amino-acid biosynthesis; L-arginine biosynthesis; L-arginine from L-ornithine and carbamoyl phosphate: step 1/3. Reversibly catalyzes the transfer of the carbamoyl group from carbamoyl phosphate (CP) to the N(epsilon) atom of ornithine (ORN) to produce L-citrulline. This is Ornithine carbamoyltransferase from Clavibacter sepedonicus (Clavibacter michiganensis subsp. sepedonicus).